The primary structure comprises 180 residues: Small ribosomal subunit protein uS4 (180 aa).

In terms of domain architecture, S4 RNA-binding spans 104–166; it reads RRLQTIVHRK…PTSPFKNNPP (63 aa). The disordered stretch occupies residues 155–180; it reads FYPTSPFKNNPPTAGQGEVNVEQKGN.

This sequence belongs to the universal ribosomal protein uS4 family. Part of the 30S ribosomal subunit. Contacts protein S5. The interaction surface between S4 and S5 is involved in control of translational fidelity.

Its function is as follows. One of the primary rRNA binding proteins, it binds directly to 16S rRNA where it nucleates assembly of the body of the 30S subunit. Functionally, with S5 and S12 plays an important role in translational accuracy. The chain is Small ribosomal subunit protein uS4 from Metallosphaera sedula (strain ATCC 51363 / DSM 5348 / JCM 9185 / NBRC 15509 / TH2).